The following is a 372-amino-acid chain: 4-hydroxybenzoate polyprenyltransferase, mitochondrial (372 aa).

The transit peptide at 1 to 42 (MFIWQRKSILLGRSILGSGRVTVAGIIGSSRKRYTSSSSSSS) directs the protein to the mitochondrion. Helical transmembrane passes span 92-112 (PVGTWLLYLPCSWSILMGAMM), 114-134 (GATLSATAGMLGIFGVGALVM), 171-191 (ALVFLGAQTLVGMGVLSLLPA), 193-213 (CWWLGLASLPIVFTYPLFKRF), 229-249 (ALLGFPAMGVMSWPTMIPLYL), 298-318 (IALLAVAGLNSGLLWGPGFIG), and 352-372 (TGLYFTYALAVDYILRLFGFL).

This sequence belongs to the UbiA prenyltransferase family. Requires Mg(2+) as cofactor.

It is found in the mitochondrion inner membrane. The enzyme catalyses an all-trans-polyprenyl diphosphate + 4-hydroxybenzoate = a 4-hydroxy-3-(all-trans-polyprenyl)benzoate + diphosphate. It functions in the pathway cofactor biosynthesis; ubiquinone biosynthesis. Functionally, catalyzes the prenylation of para-hydroxybenzoate (PHB) with an all-trans polyprenyl group. Mediates the second step in the final reaction sequence of coenzyme Q (CoQ) biosynthesis, which is the condensation of the polyisoprenoid side chain with PHB, generating the first membrane-bound Q intermediate. The protein is 4-hydroxybenzoate polyprenyltransferase, mitochondrial of Saccharomyces cerevisiae (strain ATCC 204508 / S288c) (Baker's yeast).